Here is a 418-residue protein sequence, read N- to C-terminus: Mitochondrial outer membrane protein SLC25A46 (418 aa).

Ser32 and Ser35 each carry phosphoserine. Residue Thr45 is modified to Phosphothreonine. Residues 46–96 (PPDIPGSRNLHWGEKSPSYGVPSAPPTLEGPAEEPFPGGGDGPRPGRSSEQ) are disordered. The stretch at 96–187 (QLNRFAGFGI…GIISEFTPLP (92 aa)) is one Solcar 1 repeat. The next 6 membrane-spanning stretches (helical) occupy residues 103 to 123 (FGIG…CIVL), 167 to 187 (FIVQ…TPLP), 202 to 222 (HLLL…ASLI), 258 to 278 (LLPL…HYII), 314 to 334 (FPEL…LYPL), and 382 to 402 (VFGF…HATI). The Solcar 2 repeat unit spans residues 311–416 (DAYFPELIAN…KIIYSTLLQN (106 aa)).

This sequence belongs to the mitochondrial carrier (TC 2.A.29) family. Associates with the mitochondrial contact site and cristae organizing system (MICOS) complex. May associate with the endoplasmic reticulum membrane protein complex (EMC). Widely expressed. Highly expressed in hindbrain, spinal cord and brain coronal sections containing corpus callosum, fornix, optic chiasm, thalamus, hypothalamus, midbrain, pons and cerebellum.

Its subcellular location is the mitochondrion outer membrane. Its function is as follows. Transmembrane protein of the mitochondrial outer membrane that controls mitochondrial organization. May regulate the assembly of the MICOS (mitochondrial contact site and cristae organizing system) complex which is essential to the biogenesis and dynamics of mitochondrial cristae, the inwards folds of the inner mitochondrial membrane. Through its interaction with the EMC (endoplasmic reticulum membrane protein complex), could regulate mitochondrial lipid homeostasis and thereby mitochondrial fission. This is Mitochondrial outer membrane protein SLC25A46 from Rattus norvegicus (Rat).